The primary structure comprises 563 residues: MSEITLGRYLFERLKQVEVQTIFGLPGDFNLSLLDNIYEVPGMRWAGNANELNAAYAADGYARLKGMSCIITTFGVGELSALNGIAGSYAEHVGVLHVVGVPSVSSQAKQLLLHHTLGNGDFTVFHRMSSNISETTAMITDINTAPAEIDRCIRTTYVSQRPVYLGLPANLVDLTVPASLLDTPIDLSLKPNDPEAEEEVIENVLQLIKEAKNPVILADACCSRHDAKAETKKLIDLTQFPAFVTPMGKGSIDEKHPRFGGVYVGTLSSPAVKEAVESADLVLSVGALLSDFNTGSFSYSYKTKNIVEFHSDYTKIRSATFPGVQMKFALQKLLTKVADAAKGYKPVPVPSEPEHNEAVADSTPLKQEWVWTQVGEFLREGDVVITETGTSAFGINQTHFPNNTYGISQVLWGSIGFTTGATLGAAFAAEEIDPKKRVILFIGDGSLQLTVQEISTMIRWGLKPYLFVLNNDGYTIERLIHGETAQYNCIQNWQHLELLPTFGAKDYEAVRVSTTGEWNKLTTDEKFQDNTRIRLIEVMLPTMDAPSNLVKQAQLTAATNAKN.

Pyruvate-binding residues include aspartate 28 and histidine 115. Residues threonine 390 and 413–415 (GSI) contribute to the thiamine diphosphate site. Residue aspartate 444 participates in Mg(2+) binding. Residues 445–446 (GS) and 471–476 (NDGYTI) each bind thiamine diphosphate. 2 residues coordinate Mg(2+): asparagine 471 and glycine 473. Pyruvate is bound at residue glutamate 477.

The protein belongs to the TPP enzyme family. As to quaternary structure, homotetramer. Mg(2+) serves as cofactor. It depends on thiamine diphosphate as a cofactor.

It catalyses the reaction a 2-oxocarboxylate + H(+) = an aldehyde + CO2. The enzyme catalyses pyruvate + H(+) = acetaldehyde + CO2. This is Pyruvate decarboxylase (PDC1) from Kluyveromyces lactis (strain ATCC 8585 / CBS 2359 / DSM 70799 / NBRC 1267 / NRRL Y-1140 / WM37) (Yeast).